We begin with the raw amino-acid sequence, 262 residues long: Small ribosomal subunit protein eS4A (262 aa).

The 64-residue stretch at 42 to 105 folds into the S4 RNA-binding domain; the sequence is LPLIVFLRNR…GEHFRLVYDI (64 aa).

It belongs to the eukaryotic ribosomal protein eS4 family. Component of the small ribosomal subunit (SSU). Mature yeast ribosomes consist of a small (40S) and a large (60S) subunit. The 40S small subunit contains 1 molecule of ribosomal RNA (18S rRNA) and at least 33 different proteins. The large 60S subunit contains 3 rRNA molecules (25S, 5.8S and 5S rRNA) and at least 46 different proteins.

Its subcellular location is the cytoplasm. Its function is as follows. Component of the ribosome, a large ribonucleoprotein complex responsible for the synthesis of proteins in the cell. The small ribosomal subunit (SSU) binds messenger RNAs (mRNAs) and translates the encoded message by selecting cognate aminoacyl-transfer RNA (tRNA) molecules. The large subunit (LSU) contains the ribosomal catalytic site termed the peptidyl transferase center (PTC), which catalyzes the formation of peptide bonds, thereby polymerizing the amino acids delivered by tRNAs into a polypeptide chain. The nascent polypeptides leave the ribosome through a tunnel in the LSU and interact with protein factors that function in enzymatic processing, targeting, and the membrane insertion of nascent chains at the exit of the ribosomal tunnel. This is Small ribosomal subunit protein eS4A (rps401) from Schizosaccharomyces pombe (strain 972 / ATCC 24843) (Fission yeast).